A 72-amino-acid chain; its full sequence is Translation initiation factor IF-1 (72 aa).

An S1-like domain is found at 1-72 (MSKEEVLEFS…TKGRITYRYK (72 aa)).

The protein belongs to the IF-1 family. In terms of assembly, component of the 30S ribosomal translation pre-initiation complex which assembles on the 30S ribosome in the order IF-2 and IF-3, IF-1 and N-formylmethionyl-tRNA(fMet); mRNA recruitment can occur at any time during PIC assembly.

The protein localises to the cytoplasm. In terms of biological role, one of the essential components for the initiation of protein synthesis. Stabilizes the binding of IF-2 and IF-3 on the 30S subunit to which N-formylmethionyl-tRNA(fMet) subsequently binds. Helps modulate mRNA selection, yielding the 30S pre-initiation complex (PIC). Upon addition of the 50S ribosomal subunit IF-1, IF-2 and IF-3 are released leaving the mature 70S translation initiation complex. The sequence is that of Translation initiation factor IF-1 from Bartonella tribocorum (strain CIP 105476 / IBS 506).